A 184-amino-acid polypeptide reads, in one-letter code: Isopentenyl-diphosphate Delta-isomerase (184 aa).

2 residues coordinate Mn(2+): histidine 25 and histidine 32. The region spanning proline 30–leucine 164 is the Nudix hydrolase domain. Cysteine 67 is an active-site residue. Residue histidine 69 coordinates Mn(2+). Glutamate 87 provides a ligand contact to Mg(2+). Glutamate 114 and glutamate 116 together coordinate Mn(2+). The active site involves glutamate 116.

This sequence belongs to the IPP isomerase type 1 family. In terms of assembly, homodimer. Mg(2+) is required as a cofactor. The cofactor is Mn(2+).

Its subcellular location is the cytoplasm. The catalysed reaction is isopentenyl diphosphate = dimethylallyl diphosphate. It functions in the pathway isoprenoid biosynthesis; dimethylallyl diphosphate biosynthesis; dimethylallyl diphosphate from isopentenyl diphosphate: step 1/1. Catalyzes the 1,3-allylic rearrangement of the homoallylic substrate isopentenyl (IPP) to its highly electrophilic allylic isomer, dimethylallyl diphosphate (DMAPP). This Klebsiella pneumoniae (strain 342) protein is Isopentenyl-diphosphate Delta-isomerase.